The sequence spans 336 residues: MENIQIKNFIYDIATGYIKSYSLKVILELEIPNKLKNECNGYNEHGLYVLLRTLSTMGIFKEDEEIDRLFSNTEISETLINDTDKYPWVNDSYFQVTLLPYFKHIEESLKTGKAMGTFNSGYNDGFDFIDKEKNLKKYFHNTLTEYTRTQIDSILEIVDFSNFKTIVDLGGSQGESIKKILDKYHLNNSIIEKGINYDLKEVIENNEKNYKDNRYFEIMGNFFTDETFPIGNCYLVKYIFHMFSDNQVLEILNKIYKSIKSSYQNEVCIYIFDHIIYKNKKSIPISIEYHTINILNGGKERTLNEWNNLIKLSNFKIDKVSSLPNILCSFIKLSLN.

Residues Gly-170, Asp-198, Asn-221, Phe-222, and Lys-237 each contribute to the S-adenosyl-L-methionine site. The active-site Proton acceptor is the His-241.

Belongs to the class I-like SAM-binding methyltransferase superfamily. Cation-independent O-methyltransferase family. COMT subfamily.

The enzyme catalyses (3,5-dichloro-2,4,6-trihydroxyphenyl)hexan-1-one + S-adenosyl-L-methionine = 1-(3,5-dichloro-2,6-dihydroxy-4-methoxyphenyl)hexan-1-one + S-adenosyl-L-homocysteine + H(+). The chain is O-methyltransferase 2 (omt2) from Dictyostelium discoideum (Social amoeba).